Here is a 121-residue protein sequence, read N- to C-terminus: Large ribosomal subunit protein bL19 (121 aa).

It belongs to the bacterial ribosomal protein bL19 family.

Its function is as follows. This protein is located at the 30S-50S ribosomal subunit interface and may play a role in the structure and function of the aminoacyl-tRNA binding site. The chain is Large ribosomal subunit protein bL19 from Amoebophilus asiaticus (strain 5a2).